The sequence spans 857 residues: Autoinducer 2 sensor kinase/phosphatase LuxQ (857 aa).

The next 2 helical transmembrane spans lie at 20-40 (IIFL…YYFS) and 283-303 (LGLA…RSWI). The Histidine kinase domain maps to 490–712 (KMSHEIRTPL…TFYLSIPVEK (223 aa)). At H493 the chain carries Phosphohistidine; by autocatalysis. The 116-residue stretch at 735–850 (KVLLVEDNHT…ELHDELLHFK (116 aa)) folds into the Response regulatory domain. Position 784 is a 4-aspartylphosphate (D784).

In terms of assembly, binds the complex formed by the autoinducer and LuxP.

Its subcellular location is the cell inner membrane. The catalysed reaction is ATP + protein L-histidine = ADP + protein N-phospho-L-histidine.. Functionally, at low cell density, in absence of autoinducer has a kinase activity, and autophosphorylates on a histidine residue. The phosphoryl group is then transferred to an aspartate residue in the response regulator domain. The phosphoryl group is transferred to LuxU, and ultimately to LuxO. At high cell density, in the presence of autoinducer, the kinase activity is inactivated, and the response regulator domain has a phosphatase activity. This is Autoinducer 2 sensor kinase/phosphatase LuxQ (luxQ) from Vibrio vulnificus (strain YJ016).